The chain runs to 62 residues: uncharacterized protein (62 aa).

4Fe-4S ferredoxin-type domains lie at 2-31 and 32-62; these read AVTI…EIEG and DKVV…VEPE. [4Fe-4S] cluster is bound by residues Cys10, Cys15, Cys18, Cys22, Cys42, Cys45, Cys48, and Cys52.

It depends on [4Fe-4S] cluster as a cofactor.

This is an uncharacterized protein from Methanocaldococcus jannaschii (strain ATCC 43067 / DSM 2661 / JAL-1 / JCM 10045 / NBRC 100440) (Methanococcus jannaschii).